Consider the following 295-residue polypeptide: Small ribosomal subunit biogenesis GTPase RsgA (295 aa).

One can recognise a CP-type G domain in the interval 68 to 228 (KNLLVKPHVA…VVDTPGFANL (161 aa)). Residues 117–120 (NKMD) and 170–178 (GLSGVGKSS) contribute to the GTP site. The Zn(2+) site is built by cysteine 250, cysteine 255, histidine 257, and cysteine 263.

Belongs to the TRAFAC class YlqF/YawG GTPase family. RsgA subfamily. In terms of assembly, monomer. Associates with 30S ribosomal subunit, binds 16S rRNA. Requires Zn(2+) as cofactor.

It is found in the cytoplasm. Its function is as follows. One of several proteins that assist in the late maturation steps of the functional core of the 30S ribosomal subunit. Helps release RbfA from mature subunits. May play a role in the assembly of ribosomal proteins into the subunit. Circularly permuted GTPase that catalyzes slow GTP hydrolysis, GTPase activity is stimulated by the 30S ribosomal subunit. The chain is Small ribosomal subunit biogenesis GTPase RsgA from Thermotoga neapolitana (strain ATCC 49049 / DSM 4359 / NBRC 107923 / NS-E).